The chain runs to 242 residues: Putative cellulose biosynthesis protein BcsQ (242 aa).

1 to 8 is a binding site for ATP; that stretch reads MRGGVGTT.

The protein belongs to the BcsQ family.

A C-terminal pseudogene fragment of BcsQ, which has a premature stop codon at position 6 of the intact protein. The mutation prevents cellulose synthesis, and has polar effects on transcription of downstream gene bcsA and probably also bcsB, bcsZ and bcsC. When the reading frame is restored cellulose biosynthesis is also restored, see (AC P0DP92) for an intact protein. May play a role in subcellular localization of an active cellulose biosynthesis apparatus at the bacterial cell pole. In Escherichia coli (strain K12), this protein is Putative cellulose biosynthesis protein BcsQ (bcsQ).